The sequence spans 200 residues: Dephospho-CoA kinase (200 aa).

The region spanning 2–200 is the DPCK domain; that stretch reads LIAVVGKAGV…CHHGHYQTPK (199 aa). ATP is bound at residue 10–15; it reads GVGKTT.

Belongs to the CoaE family.

The protein localises to the cytoplasm. It carries out the reaction 3'-dephospho-CoA + ATP = ADP + CoA + H(+). Its pathway is cofactor biosynthesis; coenzyme A biosynthesis; CoA from (R)-pantothenate: step 5/5. In terms of biological role, catalyzes the phosphorylation of the 3'-hydroxyl group of dephosphocoenzyme A to form coenzyme A. This chain is Dephospho-CoA kinase, found in Mycoplasma pneumoniae (strain ATCC 29342 / M129 / Subtype 1) (Mycoplasmoides pneumoniae).